Here is a 272-residue protein sequence, read N- to C-terminus: Glutamate racemase (272 aa).

Substrate is bound by residues 12-13 and 44-45; these read DS and YG. Cys75 acts as the Proton donor/acceptor in catalysis. Residue 76-77 coordinates substrate; it reads NT. Cys185 acts as the Proton donor/acceptor in catalysis. 186–187 is a binding site for substrate; it reads TH.

Belongs to the aspartate/glutamate racemases family.

The enzyme catalyses L-glutamate = D-glutamate. It functions in the pathway cell wall biogenesis; peptidoglycan biosynthesis. Functionally, provides the (R)-glutamate required for cell wall biosynthesis. The polypeptide is Glutamate racemase (Mycobacterium leprae (strain TN)).